Here is a 170-residue protein sequence, read N- to C-terminus: Putative pre-16S rRNA nuclease (170 aa).

Belongs to the YqgF nuclease family.

It localises to the cytoplasm. In terms of biological role, could be a nuclease involved in processing of the 5'-end of pre-16S rRNA. The protein is Putative pre-16S rRNA nuclease of Synechococcus sp. (strain JA-2-3B'a(2-13)) (Cyanobacteria bacterium Yellowstone B-Prime).